A 255-amino-acid chain; its full sequence is NAD kinase (255 aa).

Residue Asp-44 is the Proton acceptor of the active site. Residues 44–45 (DG), His-49, 114–115 (NE), Asp-144, Ala-152, 155–160 (SAYNLS), and Gln-216 contribute to the NAD(+) site.

The protein belongs to the NAD kinase family. A divalent metal cation is required as a cofactor.

It is found in the cytoplasm. It catalyses the reaction NAD(+) + ATP = ADP + NADP(+) + H(+). In terms of biological role, involved in the regulation of the intracellular balance of NAD and NADP, and is a key enzyme in the biosynthesis of NADP. Catalyzes specifically the phosphorylation on 2'-hydroxyl of the adenosine moiety of NAD to yield NADP. This Rickettsia canadensis (strain McKiel) protein is NAD kinase.